We begin with the raw amino-acid sequence, 609 residues long: MAPPHPRDPSTAANYEQVTVSHYALKWKVDFEKKHIAGDVSITLDVKQDTERIVLDTRDLSVQSVALNLNGEPKKAGFTLEDNQALGQKLVITTESLKSGDRPVLEIKYESSNNAAALQFLTAEQTTDRVAPYLFSQCQAINARSIVPCMDTPSVKSTYEAEVCVPIGLTCLMSAIGQGSTPSECGKRTIFSFKQPVSIPSYLLAIVVGHLERKEISERCAVWAEPSQAEASFYEFAETEKILKVAEDVAGPYVWGRYDLVVLPATFPFGGMENPCLTFITPTLLAGDRSLVNVIAHEISHSWTGNLVTNFSWEHFWLNEGFTVFLERKIHGKMYGELERQFESESGYEEALVRTVNDVFGPDHEYTKLVQNLGNADPDDAFSSVPYEKGSALLFTIEQALGDNSRFEQFLRDYIQKYAYKTVSTEEWKEYLYDSFTDKKVILDNIDWNLWLHKAGLPPKPKYDSTPMQACKDLAAKWTTEGSEAPTDGEVFAKMSNSQKLAVLDAVRVNKTMFGDRMPALTATYKLDQAKNAELKFSWLMLGLETKWSPIVDASLAFALAVGRMKYCKPIYRSLFGWSATRDRAISQFKANIPNMHPITVKAIQSLLK.

Residues 137–139 (QCQ) and 268–273 (PFGGME) each bind substrate. Position 297 (H297) interacts with Zn(2+). Residue E298 is the Proton acceptor of the active site. Zn(2+) is bound by residues H301 and E320. Y387 serves as the catalytic Proton donor. 564 to 566 (RMK) contacts substrate.

This sequence belongs to the peptidase M1 family. It depends on Zn(2+) as a cofactor.

The protein localises to the cytoplasm. It carries out the reaction Release of N-terminal Arg and Lys from oligopeptides when P1' is not Pro. Also acts on arylamides of Arg and Lys.. Functionally, aminopeptidase which preferentially removes N-terminal Arg and Lys residues from peptides and proteins. The chain is Aminopeptidase ltah-1.1 from Caenorhabditis elegans.